The primary structure comprises 636 residues: Polyadenylate-binding protein 1 (636 aa).

An N-acetylmethionine modification is found at M1. 4 consecutive RRM domains span residues 11 to 89, 99 to 175, 191 to 268, and 294 to 370; these read ASLY…WSQR, GNIF…RFKS, TNVY…RAQK, and VNLY…LAQR. The segment at 166-289 is UNR-binding; that stretch reads RKVFVGRFKS…FEQMKQDRIT (124 aa). An N6-methyllysine modification is found at K299. The residue at position 315 (S315) is a Phosphoserine. Position 319 is a phosphothreonine (T319). Residues R385, R419, R432, and R436 each carry the omega-N-methylarginine modification. Omega-N-methylated arginine; by CARM1 occurs at positions 455 and 460. Omega-N-methylarginine occurs at positions 475 and 481. Residue R493 is modified to Asymmetric dimethylarginine; alternate. Position 493 is a dimethylated arginine; alternate (R493). An Omega-N-methylarginine; alternate modification is found at R493. Residue R506 is modified to Omega-N-methylarginine. The residue at position 512 (K512) is an N6-acetyllysine. R518 is subject to Omega-N-methylarginine. Positions 542-619 constitute a PABC domain; it reads QEPLTASMLA…AVAVLQAHQA (78 aa).

Belongs to the polyadenylate-binding protein type-1 family. May form homodimers. Component of a multisubunit autoregulatory ribonucleoprotein complex (ARC), at least composed of IGF2BP1, PABPC1 and CSDE1. Directly interacts with IGF2BP1. Part of a complex associated with the FOS mCRD domain and consisting of HNRPD, SYNCRIP, PAIP1 and CSDE1/UNR. Interacts with PAIP1 and PAIP2 (via the PABPC1-interacting motifs PAM1 and PAM2). Interacts with PAIP1 with a 1:1 stoichiometry and with PAIP2 with a 1:2 stoichiometry. The interaction with CSDE1 is direct and RNA-independent. Found in a mRNP complex with YBX2. Interacts with TENT2/GLD2. Identified in the spliceosome C complex. Identified in a mRNP complex, at least composed of DHX9, DDX3X, ELAVL1, HNRNPU, IGF2BP1, ILF3, PABPC1, PCBP2, PTBP2, STAU1, STAU2, SYNCRIP and YBX1. The interaction with DDX3X is direct and RNA-independent. This interaction increases in stressed cells and decreases during cell recovery. Identified in a IGF2BP1-dependent mRNP granule complex containing untranslated mRNAs. Interacts with NXF1/TAP. Interacts with PIWIL1. Interacts with AGO1, AGO2, GSPT1 and GSPT2. Interacts with LARP4B. Interacts (via the second and third RRM domains and the C-terminus) with PAIP2B (via central acidic portion and C-terminus). Forms a complex with LARP1 and SHFL. Interacts with LARP4. Interacts with ZFC3H1 in a RNase-sensitive manner. Interacts with TRIM71 (via NHL repeats) in an RNA-dependent manner. Interacts with TENT5C; the interaction has no effect on TENT5C poly(A) polymerase function. Interacts with G3BP1 and G3BP2. Interacts with ENDOV; the interaction is RNA-dependent and stimulates ENDOV activity. Interacts with UPF1; the interaction is RNA-dependent. Interacts with IGF2BP2 and IGF2BP3. May interact with SETX. Interacts with RBM46. Interacts with PAN3 isoform 1/Pan3L and isoform 3/Pan3S (via N-terminus); interaction with isoform 1 is less efficient than with isoform 3. In terms of processing, phosphorylated by MAPKAPK2. Methylated by CARM1. Arg-493 is dimethylated, probably to asymmetric dimethylarginine.

It is found in the cytoplasm. It localises to the stress granule. The protein localises to the nucleus. The protein resides in the cell projection. Its subcellular location is the lamellipodium. Functionally, binds the poly(A) tail of mRNA, including that of its own transcript, and regulates processes of mRNA metabolism such as pre-mRNA splicing and mRNA stability. Its function in translational initiation regulation can either be enhanced by PAIP1 or repressed by PAIP2. Can probably bind to cytoplasmic RNA sequences other than poly(A) in vivo. Binds to N6-methyladenosine (m6A)-containing mRNAs and contributes to MYC stability by binding to m6A-containing MYC mRNAs. Involved in translationally coupled mRNA turnover. Implicated with other RNA-binding proteins in the cytoplasmic deadenylation/translational and decay interplay of the FOS mRNA mediated by the major coding-region determinant of instability (mCRD) domain. Involved in regulation of nonsense-mediated decay (NMD) of mRNAs containing premature stop codons; for the recognition of premature termination codons (PTC) and initiation of NMD a competitive interaction between UPF1 and PABPC1 with the ribosome-bound release factors is proposed. By binding to long poly(A) tails, may protect them from uridylation by ZCCHC6/ZCCHC11 and hence contribute to mRNA stability. This is Polyadenylate-binding protein 1 (Pabpc1) from Rattus norvegicus (Rat).